The following is a 200-amino-acid chain: Inner membrane-spanning protein YciB (200 aa).

A run of 6 helical transmembrane segments spans residues 7-27, 32-52, 56-76, 93-113, 126-146, and 153-173; these read HPLF…VVNA, FAAT…SYVV, VPLM…LTLV, LFAA…AIMF, ILTF…EIIW, and FWVG…AIAQ.

The protein belongs to the YciB family.

Its subcellular location is the cell inner membrane. In terms of biological role, plays a role in cell envelope biogenesis, maintenance of cell envelope integrity and membrane homeostasis. This Bradyrhizobium sp. (strain BTAi1 / ATCC BAA-1182) protein is Inner membrane-spanning protein YciB.